We begin with the raw amino-acid sequence, 290 residues long: TIMELESS-interacting protein (290 aa).

Positions 1–59 are disordered; that stretch reads MLEPQENGLTDLPDYEHIEDETFPPFPPPASPGREDGEGAEPEEESGRGAPVPVPPKRT. Residues 67–143 form an interaction with TIMELESS region; the sequence is LNAERLISER…KEVQTCLKRI (77 aa). Phosphoserine occurs at positions 194 and 222. Polar residues predominate over residues 221–242; it reads NSQSLGNDLSVNTPSTQTSEAG. Positions 221–290 are disordered; it reads NSQSLGNDLS…VEETQLDQSF (70 aa). A phosphothreonine mark is found at T233 and T244.

It belongs to the CSM3 family. Interacts with TIMELESS (via N-terminus), which impairs TIMELESS self-association. Associates with the MCM2-7 complex. Interacts with RPA2, PRDX2.

The protein resides in the cytoplasm. The protein localises to the nucleus. Functionally, plays an important role in the control of DNA replication and the maintenance of replication fork stability. Important for cell survival after DNA damage or replication stress. May be specifically required for the ATR-CHEK1 pathway in the replication checkpoint induced by hydroxyurea or ultraviolet light. Forms a complex with TIMELESS and this complex regulates DNA replication processes under both normal and stress conditions, stabilizes replication forks and influences both CHEK1 phosphorylation and the intra-S phase checkpoint in response to genotoxic stress. The chain is TIMELESS-interacting protein (TIPIN) from Bos taurus (Bovine).